The primary structure comprises 602 residues: FAD-binding monooxygenase hmp7 (602 aa).

FAD is bound by residues 108-111 (TWYW), 120-121 (DV), and tyrosine 126. 118-120 (QCD) contacts NADP(+). Residues 252 to 258 (TGATAVQ) and 275 to 276 (RT) contribute to the NADP(+) site.

This sequence belongs to the FAD-binding monooxygenase family. The cofactor is FAD.

Its pathway is secondary metabolite biosynthesis. In terms of biological role, FAD-binding monooxygenase; part of the gene cluster that mediates the biosynthesis of hypothemycin, a resorcylic acid lactone (RAL) that irreversibly inhibits a subset of protein kinases with a conserved cysteine in the ATP binding site such as human ERK2. The first step is performed by both PKSs hmp3 and hmp8 and leads to the production of 7',8'-dehydrozearalenol (DHZ). The highly reducing PKS hpm8 synthesizes the reduced hexaketide (7S,11S,2E,8E)-7,11-dihydroxy-dodeca-2,8-dienoate, which is transferred downstream to the non-reducing PKS hpm3. Hpm3 then extends the reduced hexaketide to a nonaketide, after which regioselective cyclization and macrolactonization affords DHZ. The next step is the conversion of DHZ into aigialomycin C and is performed by the O-methyltransferase hmp5, the FAD-binding monooxygenase hmp7, and the cytochrome P450 monooxygenase hmp1. The wide substrate tolerance of the hmp5 and hmp7 implies that the reactions from DHZ to aigialomycin C can occur in any order. The steps from aigialomycin C to hypothemycin are less well established. The FAD-linked oxidoreductase hmp9 presumably catalyzes oxidation of the C-6' hydroxyl to a ketone. The timing of this oxidation is important, since the resulting enone functional group is a Michael acceptor that can react spontaneously with glutathione, an abundant metabolite in fungal cells. The glutathione S-transferase hmp2 catalyzes cis-trans isomerization of the 7',8' double bond with equilibrium favoring the trans isomer. The hpm6-encoded transporter might preferentially pump hypothemycin out of the cell relative to the trans isomer aigialomycin A. The cis-to-trans isomerization may be coupled with C-4' hydroxylation, since all known hypothemycin analogs containing the enone functional group also have hydroxyl groups at both C-4' and C-5'. The polypeptide is FAD-binding monooxygenase hmp7 (Hypomyces subiculosus (Nectria subiculosa)).